A 144-amino-acid chain; its full sequence is Putative pre-16S rRNA nuclease (144 aa).

This sequence belongs to the YqgF nuclease family.

Its subcellular location is the cytoplasm. Functionally, could be a nuclease involved in processing of the 5'-end of pre-16S rRNA. This chain is Putative pre-16S rRNA nuclease, found in Lactiplantibacillus plantarum (strain ATCC BAA-793 / NCIMB 8826 / WCFS1) (Lactobacillus plantarum).